Reading from the N-terminus, the 649-residue chain is Pesticidal crystal protein Cry3Ca (649 aa).

A compositionally biased stretch (basic and acidic residues) spans 1 to 13 (MNPNNRSEHDTIK). The disordered stretch occupies residues 1-29 (MNPNNRSEHDTIKATENNEVSNNHAQYPL). Over residues 14-25 (ATENNEVSNNHA) the composition is skewed to polar residues.

It belongs to the delta endotoxin family.

Functionally, promotes colloidosmotic lysis by binding to the midgut epithelial cells of Coleoptera. This is Pesticidal crystal protein Cry3Ca (cry3Ca) from Bacillus thuringiensis subsp. kurstaki.